The following is a 102-amino-acid chain: NADH-quinone oxidoreductase subunit K (102 aa).

Helical transmembrane passes span 6–26, 30–50, and 65–85; these read MEHGLLLAAVLFCIGLCGLLI, LLFILMSIEIMMNASALAFVV, and ILVISLAAAEASIGLALLLLL.

This sequence belongs to the complex I subunit 4L family. In terms of assembly, NDH-1 is composed of 14 different subunits. Subunits NuoA, H, J, K, L, M, N constitute the membrane sector of the complex.

It localises to the cell inner membrane. The enzyme catalyses a quinone + NADH + 5 H(+)(in) = a quinol + NAD(+) + 4 H(+)(out). Functionally, NDH-1 shuttles electrons from NADH, via FMN and iron-sulfur (Fe-S) centers, to quinones in the respiratory chain. The immediate electron acceptor for the enzyme in this species is believed to be ubiquinone. Couples the redox reaction to proton translocation (for every two electrons transferred, four hydrogen ions are translocated across the cytoplasmic membrane), and thus conserves the redox energy in a proton gradient. In Aeromonas hydrophila subsp. hydrophila (strain ATCC 7966 / DSM 30187 / BCRC 13018 / CCUG 14551 / JCM 1027 / KCTC 2358 / NCIMB 9240 / NCTC 8049), this protein is NADH-quinone oxidoreductase subunit K.